Consider the following 297-residue polypeptide: Aspartate carbamoyltransferase catalytic subunit (297 aa).

Arg49 and Thr50 together coordinate carbamoyl phosphate. An L-aspartate-binding site is contributed by Lys77. Carbamoyl phosphate is bound by residues Arg99, His129, and Gln132. L-aspartate contacts are provided by Arg162 and Arg215. Residues Gly256 and Pro257 each coordinate carbamoyl phosphate.

This sequence belongs to the aspartate/ornithine carbamoyltransferase superfamily. ATCase family. As to quaternary structure, heterododecamer (2C3:3R2) of six catalytic PyrB chains organized as two trimers (C3), and six regulatory PyrI chains organized as three dimers (R2).

The catalysed reaction is carbamoyl phosphate + L-aspartate = N-carbamoyl-L-aspartate + phosphate + H(+). Its pathway is pyrimidine metabolism; UMP biosynthesis via de novo pathway; (S)-dihydroorotate from bicarbonate: step 2/3. Functionally, catalyzes the condensation of carbamoyl phosphate and aspartate to form carbamoyl aspartate and inorganic phosphate, the committed step in the de novo pyrimidine nucleotide biosynthesis pathway. This is Aspartate carbamoyltransferase catalytic subunit from Legionella pneumophila (strain Paris).